The sequence spans 174 residues: UPF0340 protein SAHV_2098 (174 aa).

This sequence belongs to the UPF0340 family.

The polypeptide is UPF0340 protein SAHV_2098 (Staphylococcus aureus (strain Mu3 / ATCC 700698)).